The primary structure comprises 593 residues: ATP-dependent lipid A-core flippase (593 aa).

6 helical membrane passes run 33 to 55 (YIFL…YGFG), 67 to 87 (ILML…VGSF), 146 to 166 (AIIT…VMFV), 169 to 189 (WQLS…ISII), 258 to 278 (VIQI…AIFG), and 284 to 304 (GSSW…AAIL). The 282-residue stretch at 38–319 (ADASMIYLIN…LTKVNVVIQK (282 aa)) folds into the ABC transmembrane type-1 domain. The ABC transporter domain maps to 351-585 (VTIKDLSFAF…GGLYTGSINR (235 aa)). An ATP-binding site is contributed by 383–390 (GKSGSGKT).

It belongs to the ABC transporter superfamily. Lipid exporter (TC 3.A.1.106) family. As to quaternary structure, homodimer.

The protein resides in the cell membrane. The catalysed reaction is ATP + H2O + lipid A-core oligosaccharideSide 1 = ADP + phosphate + lipid A-core oligosaccharideSide 2.. Its function is as follows. Involved in lipopolysaccharide (LPS) biosynthesis. Translocates lipid A-core from the inner to the outer leaflet of the inner membrane. Transmembrane domains (TMD) form a pore in the inner membrane and the ATP-binding domain (NBD) is responsible for energy generation. This Francisella novicida protein is ATP-dependent lipid A-core flippase.